Consider the following 133-residue polypeptide: ATP synthase epsilon chain (133 aa).

Positions 103–133 (VSQMEGQEPSTEKIKAQQNFNRARARVQATK) are disordered.

The protein belongs to the ATPase epsilon chain family. F-type ATPases have 2 components, CF(1) - the catalytic core - and CF(0) - the membrane proton channel. CF(1) has five subunits: alpha(3), beta(3), gamma(1), delta(1), epsilon(1). CF(0) has three main subunits: a, b and c.

It is found in the cellular thylakoid membrane. In terms of biological role, produces ATP from ADP in the presence of a proton gradient across the membrane. The sequence is that of ATP synthase epsilon chain from Prochlorococcus marinus (strain MIT 9313).